Here is a 448-residue protein sequence, read N- to C-terminus: N-succinylarginine dihydrolase (448 aa).

Residues 19–28 (GGLSYGNVAS), asparagine 110, and 137–138 (HR) each bind substrate. Residue glutamate 174 is part of the active site. Residue arginine 214 coordinates substrate. Residue histidine 250 is part of the active site. Substrate-binding residues include aspartate 252 and asparagine 365. Cysteine 371 acts as the Nucleophile in catalysis.

It belongs to the succinylarginine dihydrolase family. Homodimer.

The catalysed reaction is N(2)-succinyl-L-arginine + 2 H2O + 2 H(+) = N(2)-succinyl-L-ornithine + 2 NH4(+) + CO2. It participates in amino-acid degradation; L-arginine degradation via AST pathway; L-glutamate and succinate from L-arginine: step 2/5. Catalyzes the hydrolysis of N(2)-succinylarginine into N(2)-succinylornithine, ammonia and CO(2). In Pseudomonas paraeruginosa (strain DSM 24068 / PA7) (Pseudomonas aeruginosa (strain PA7)), this protein is N-succinylarginine dihydrolase.